The sequence spans 342 residues: Zinc transporter ZIP11 (342 aa).

Transmembrane regions (helical) follow at residues 12-32 (LLGTFFTWGMTAAGAALVFVF), 44-64 (LGFAAGVMLAASYWSLLAPAV), 72-92 (GFGAFAFFPVAVGFTLGAAFV), 194-214 (IALLILAITIHNVPEGLAVGV), 263-285 (FWYGQLSGMVEPLAGVFGAFAVV), 290-307 (ILPYALAFAAGAMVYVVM), and 322-342 (LASWASILGFVVMMSLDVGLG).

It belongs to the ZIP transporter (TC 2.A.5) family.

Its subcellular location is the cell membrane. The protein resides in the nucleus. The protein localises to the cytoplasm. It localises to the golgi apparatus. It carries out the reaction Zn(2+)(in) = Zn(2+)(out). It catalyses the reaction Cu(2+)(in) = Cu(2+)(out). Zinc importer that regulates cytosolic zinc concentrations either via zinc influx from the extracellular compartment or efflux from intracellular organelles such as Golgi apparatus. May transport copper ions as well. The transport mechanism remains to be elucidated. The sequence is that of Zinc transporter ZIP11 (SLC39A11) from Homo sapiens (Human).